Here is a 334-residue protein sequence, read N- to C-terminus: Malate dehydrogenase 2 (334 aa).

An NAD(+)-binding site is contributed by 12-18 (GAAGRVA). Substrate-binding residues include Arg93 and Arg99. NAD(+)-binding positions include Asn106, Gln113, and 130–132 (VGN). Substrate is bound by residues Asn132 and Arg166. His191 functions as the Proton acceptor in the catalytic mechanism.

Belongs to the LDH/MDH superfamily. MDH type 2 family.

The catalysed reaction is (S)-malate + NAD(+) = oxaloacetate + NADH + H(+). Functionally, catalyzes the reversible oxidation of malate to oxaloacetate. The protein is Malate dehydrogenase 2 of Albidiferax ferrireducens (strain ATCC BAA-621 / DSM 15236 / T118) (Rhodoferax ferrireducens).